We begin with the raw amino-acid sequence, 608 residues long: MPKHSLEQIKEKITERSKKTRELYLENTFNPKNQPKIESLGCANIAHVTASMPEHLKMPLGSHKRKHFAIITAYNDMLSAHQPFKNYPDLIKKELQEHNAYASVASGVPAMCDGITQGYEGMELSLFSRDVIALSTAVGLSHNVFDGAFFLGVCDKIVPGLLIGALSFGNLASVFVPSGPMVSGIENYKKAKARQDFAMGKINREELLKVEMQSYHDVGTCTFYGTANSNQMMMEFMGLHVANSSFINPNNPLRKVLVEESAKRLASGKVLPLAKLIDEKSILNALIGLMATGGSTNHTLHLIAIARSCGVILNWDDFDAISNLIPLLAKVYPNGSADVNAFEACGGLAFVIKELLKEGLLFEDTHTIMDTETQKGMQNYTKTPFLENDQLVYKDAVSHSLNTDILRPVSEPFAANGGLKILKGNLGRAVIKISAIKDEHRKVKARAIVFKTQSEFLERFKNKELERDFVAVLPFQGPKSNGMPELHKLTTNLGALQDMGYKVALVTDGRMSGASGKVPSAIHLSPEGALNGAIIKIKDGDLIELDAPNNALNVLEKDFEKRGINPLFLETLENLEKPTFGLGRELFTSLRLNANTAEEGGMSFGIKV.

[4Fe-4S] cluster contacts are provided by cysteine 154 and cysteine 221.

The protein belongs to the IlvD/Edd family. It depends on [4Fe-4S] cluster as a cofactor.

It carries out the reaction 6-phospho-D-gluconate = 2-dehydro-3-deoxy-6-phospho-D-gluconate + H2O. Its pathway is carbohydrate metabolism; Entner-Doudoroff pathway. In terms of biological role, catalyzes the dehydration of 6-phospho-D-gluconate to 2-dehydro-3-deoxy-6-phospho-D-gluconate. This is Phosphogluconate dehydratase from Helicobacter pylori (strain J99 / ATCC 700824) (Campylobacter pylori J99).